The sequence spans 115 residues: Iron-sulfur cluster insertion protein ErpA (115 aa).

Cysteine 43, cysteine 107, and cysteine 109 together coordinate iron-sulfur cluster.

It belongs to the HesB/IscA family. In terms of assembly, homodimer. Iron-sulfur cluster is required as a cofactor.

Its function is as follows. Required for insertion of 4Fe-4S clusters for at least IspG. This is Iron-sulfur cluster insertion protein ErpA from Photorhabdus laumondii subsp. laumondii (strain DSM 15139 / CIP 105565 / TT01) (Photorhabdus luminescens subsp. laumondii).